We begin with the raw amino-acid sequence, 216 residues long: LexA repressor (216 aa).

Positions 28–48 form a DNA-binding region, H-T-H motif; it reads RAEIAAELGFSSANSAEEHLR. Active-site for autocatalytic cleavage activity residues include serine 134 and lysine 171.

This sequence belongs to the peptidase S24 family. As to quaternary structure, homodimer.

It carries out the reaction Hydrolysis of Ala-|-Gly bond in repressor LexA.. Its function is as follows. Represses a number of genes involved in the response to DNA damage (SOS response), including recA and lexA. In the presence of single-stranded DNA, RecA interacts with LexA causing an autocatalytic cleavage which disrupts the DNA-binding part of LexA, leading to derepression of the SOS regulon and eventually DNA repair. The sequence is that of LexA repressor from Paraburkholderia phytofirmans (strain DSM 17436 / LMG 22146 / PsJN) (Burkholderia phytofirmans).